Consider the following 275-residue polypeptide: Large ribosomal subunit protein uL2 (275 aa).

The segment at 221 to 275 is disordered; sequence RGTAMNPIDHPHGGGEGKNFGKHPVSPWGVQSKGKKTRKNKRTEKYILYNRKYKK. The segment covering 253–262 has biased composition (basic residues); that stretch reads KGKKTRKNKR.

This sequence belongs to the universal ribosomal protein uL2 family. In terms of assembly, part of the 50S ribosomal subunit. Forms a bridge to the 30S subunit in the 70S ribosome.

One of the primary rRNA binding proteins. Required for association of the 30S and 50S subunits to form the 70S ribosome, for tRNA binding and peptide bond formation. It has been suggested to have peptidyltransferase activity; this is somewhat controversial. Makes several contacts with the 16S rRNA in the 70S ribosome. This is Large ribosomal subunit protein uL2 from Wigglesworthia glossinidia brevipalpis.